Here is a 160-residue protein sequence, read N- to C-terminus: 6,7-dimethyl-8-ribityllumazine synthase (160 aa).

5-amino-6-(D-ribitylamino)uracil-binding positions include phenylalanine 22, 57 to 59, and 81 to 83; these read TYE and TII. Position 86–87 (86–87) interacts with (2S)-2-hydroxy-3-oxobutyl phosphate; that stretch reads QT. The Proton donor role is filled by histidine 89. Leucine 114 contributes to the 5-amino-6-(D-ribitylamino)uracil binding site. Arginine 128 is a (2S)-2-hydroxy-3-oxobutyl phosphate binding site.

Belongs to the DMRL synthase family. In terms of assembly, forms an icosahedral capsid composed of 60 subunits, arranged as a dodecamer of pentamers.

The enzyme catalyses (2S)-2-hydroxy-3-oxobutyl phosphate + 5-amino-6-(D-ribitylamino)uracil = 6,7-dimethyl-8-(1-D-ribityl)lumazine + phosphate + 2 H2O + H(+). The protein operates within cofactor biosynthesis; riboflavin biosynthesis; riboflavin from 2-hydroxy-3-oxobutyl phosphate and 5-amino-6-(D-ribitylamino)uracil: step 1/2. Catalyzes the formation of 6,7-dimethyl-8-ribityllumazine by condensation of 5-amino-6-(D-ribitylamino)uracil with 3,4-dihydroxy-2-butanone 4-phosphate. This is the penultimate step in the biosynthesis of riboflavin. This Buchnera aphidicola subsp. Acyrthosiphon pisum (strain Tuc7) protein is 6,7-dimethyl-8-ribityllumazine synthase.